The following is a 430-amino-acid chain: tRNA(Ile)-lysidine synthase (430 aa).

21–26 (SGGLDS) contacts ATP.

It belongs to the tRNA(Ile)-lysidine synthase family.

The protein resides in the cytoplasm. The catalysed reaction is cytidine(34) in tRNA(Ile2) + L-lysine + ATP = lysidine(34) in tRNA(Ile2) + AMP + diphosphate + H(+). In terms of biological role, ligates lysine onto the cytidine present at position 34 of the AUA codon-specific tRNA(Ile) that contains the anticodon CAU, in an ATP-dependent manner. Cytidine is converted to lysidine, thus changing the amino acid specificity of the tRNA from methionine to isoleucine. The chain is tRNA(Ile)-lysidine synthase from Salmonella typhimurium (strain LT2 / SGSC1412 / ATCC 700720).